The primary structure comprises 342 residues: MIKIGVVGGTGYTGVELLRLLARHPEANLVAITSRGDAGMPVCDMFPSLRGRVDLRFVTPQDAALDRCDVVFFATPNGIAMQQARELVDAGVRLIDLAADFRIRDVGEWEKWYGMKHASPELVAEAVYGLPERNRERIRSARILANPGCYPTAVQLGFLPLVEAGVVDLSHLIADVKSGVSGAGRKAEVHTLFAEAADNFKAYAVAGHRHLPEIRQGLEAMAGQGVGLTFVPHLTPIIRGIHATLYARLSTDVNVQKLFEERYQNELFVDVLPAGSHPETRSVRASNLCRVAVHRPQGSDVVVVLSVIDNLVKGAAGQAVQCMNIMFELDESLGLDILPVSP.

Cysteine 149 is an active-site residue.

It belongs to the NAGSA dehydrogenase family. Type 1 subfamily.

It localises to the cytoplasm. It carries out the reaction N-acetyl-L-glutamate 5-semialdehyde + phosphate + NADP(+) = N-acetyl-L-glutamyl 5-phosphate + NADPH + H(+). It functions in the pathway amino-acid biosynthesis; L-arginine biosynthesis; N(2)-acetyl-L-ornithine from L-glutamate: step 3/4. Its function is as follows. Catalyzes the NADPH-dependent reduction of N-acetyl-5-glutamyl phosphate to yield N-acetyl-L-glutamate 5-semialdehyde. This chain is N-acetyl-gamma-glutamyl-phosphate reductase, found in Aromatoleum aromaticum (strain DSM 19018 / LMG 30748 / EbN1) (Azoarcus sp. (strain EbN1)).